The following is a 314-amino-acid chain: Methionyl-tRNA formyltransferase (314 aa).

112-115 (SLLP) serves as a coordination point for (6S)-5,6,7,8-tetrahydrofolate.

The protein belongs to the Fmt family.

It carries out the reaction L-methionyl-tRNA(fMet) + (6R)-10-formyltetrahydrofolate = N-formyl-L-methionyl-tRNA(fMet) + (6S)-5,6,7,8-tetrahydrofolate + H(+). In terms of biological role, attaches a formyl group to the free amino group of methionyl-tRNA(fMet). The formyl group appears to play a dual role in the initiator identity of N-formylmethionyl-tRNA by promoting its recognition by IF2 and preventing the misappropriation of this tRNA by the elongation apparatus. This Aeromonas salmonicida (strain A449) protein is Methionyl-tRNA formyltransferase.